The following is a 675-amino-acid chain: 1,4-alpha-glucan branching enzyme TK1436 (675 aa).

E183 functions as the Nucleophile in the catalytic mechanism. 2 residues coordinate substrate: R261 and G278. D354 (proton donor) is an active-site residue. Positions 407, 467, and 476 each coordinate substrate. Disordered regions lie at residues 537 to 563 (PELE…KVLT) and 581 to 627 (EETR…LSIK). 2 stretches are compositionally biased toward basic and acidic residues: residues 549 to 563 (PPEK…KVLT) and 581 to 595 (EETR…EASK). Over residues 596–616 (RGKRKSSKSKRLPRKVSKKAP) the composition is skewed to basic residues.

Belongs to the glycosyl hydrolase 57 family. As to quaternary structure, monomer.

The enzyme catalyses Transfers a segment of a (1-&gt;4)-alpha-D-glucan chain to a primary hydroxy group in a similar glucan chain.. Catalyzes the formation of branch points in alpha-glucans by cleavage of an alpha-1,4 glycosidic bond and subsequent transfer of the cleaved-off oligosaccharide to a new alpha-1,6 position. The branch chain-length distribution of the reaction products shows degree of polymerization (DP) of 5 to 30, with two local maxima at DP 6 and DP 11. Exhibits an alpha-retaining catalytic mechanism. Does not display alpha-galactosidase or pullulanase activity, since melibiose and pullulan are not substrates. Is not able to catalyze the hydrolysis or transglycosylation of maltoheptaose, suggesting that the TK1436 protein contains neither alpha-amylase nor 4-alpha-glucanotransferase activity. The polypeptide is 1,4-alpha-glucan branching enzyme TK1436 (Thermococcus kodakarensis (strain ATCC BAA-918 / JCM 12380 / KOD1) (Pyrococcus kodakaraensis (strain KOD1))).